The sequence spans 105 residues: Dicamba O-demethylase, ferredoxin component (105 aa).

The 2Fe-2S ferredoxin-type domain occupies P2–D105. 4 residues coordinate [2Fe-2S] cluster: C40, C46, C49, and C86.

Belongs to the adrenodoxin/putidaredoxin family. As to quaternary structure, monomer. The dicamba O-demethylase multicomponent enzyme system is composed of an oxygenase component (DdmC) and an electron transfer component formed by a ferredoxin reductase (DdmA1) and a ferredoxin (DdmB). In vitro, dicamba O-demethylase assays in which DdmA2 is substituted for DdmA1 demonstrate that the two enzymes possess nearly identical activities. [2Fe-2S] cluster is required as a cofactor.

In terms of biological role, component of the dicamba O-demethylase multicomponent enzyme system involved in the degradation of the herbicide dicamba. In vitro, functions as an intermediate electron transfer protein. In Stenotrophomonas maltophilia (Pseudomonas maltophilia), this protein is Dicamba O-demethylase, ferredoxin component.